Consider the following 122-residue polypeptide: Large ribosomal subunit protein uL14 (122 aa).

It belongs to the universal ribosomal protein uL14 family. Part of the 50S ribosomal subunit. Forms a cluster with proteins L3 and L19. In the 70S ribosome, L14 and L19 interact and together make contacts with the 16S rRNA in bridges B5 and B8.

In terms of biological role, binds to 23S rRNA. Forms part of two intersubunit bridges in the 70S ribosome. The polypeptide is Large ribosomal subunit protein uL14 (Listeria monocytogenes serotype 4b (strain CLIP80459)).